The following is a 178-amino-acid chain: Peptide methionine sulfoxide reductase MsrA (178 aa).

Cys12 is an active-site residue.

The protein belongs to the MsrA Met sulfoxide reductase family.

It carries out the reaction L-methionyl-[protein] + [thioredoxin]-disulfide + H2O = L-methionyl-(S)-S-oxide-[protein] + [thioredoxin]-dithiol. The catalysed reaction is [thioredoxin]-disulfide + L-methionine + H2O = L-methionine (S)-S-oxide + [thioredoxin]-dithiol. In terms of biological role, has an important function as a repair enzyme for proteins that have been inactivated by oxidation. Catalyzes the reversible oxidation-reduction of methionine sulfoxide in proteins to methionine. The protein is Peptide methionine sulfoxide reductase MsrA of Erwinia tasmaniensis (strain DSM 17950 / CFBP 7177 / CIP 109463 / NCPPB 4357 / Et1/99).